A 319-amino-acid chain; its full sequence is Putative peptide biosynthesis protein YydG (319 aa).

The region spanning 1 to 214 (MYNKTVSINL…HCPGYDIVYH (214 aa)) is the Radical SAM core domain. Residues Cys14, Cys18, and Cys21 each contribute to the [4Fe-4S] cluster site.

The cofactor is [4Fe-4S] cluster.

Functionally, required for production of the modified peptide YydF. May activate a metalloenzyme (Potential). The protein is Putative peptide biosynthesis protein YydG (yydG) of Bacillus subtilis (strain 168).